Consider the following 533-residue polypeptide: Retinoid isomerohydrolase (533 aa).

An N-acetylserine modification is found at Ser2. Residues Thr101 and Thr105 each carry the phosphothreonine modification. A lipid anchor (S-palmitoyl cysteine; in membrane form) is attached at Cys112. An N6-acetyllysine modification is found at Lys113. Phosphoserine is present on Ser117. His180 contacts Fe cation. Cys231 carries the S-palmitoyl cysteine; in membrane form lipid modification. The Fe cation site is built by His241 and His313. Residues Cys329 and Cys330 are each lipidated (S-palmitoyl cysteine; in membrane form). His527 is a Fe cation binding site.

This sequence belongs to the carotenoid oxygenase family. In terms of assembly, interacts with MYO7A; this mediates light-dependent intracellular transport of RPE65. It depends on Fe(2+) as a cofactor. Post-translationally, palmitoylation by LRAT regulates ligand binding specificity; the palmitoylated form (membrane form) specifically binds all-trans-retinyl-palmitate, while the soluble unpalmitoylated form binds all-trans-retinol (vitamin A). Retinal pigment epithelium specific.

Its subcellular location is the cytoplasm. The protein localises to the cell membrane. The protein resides in the microsome membrane. It catalyses the reaction an all-trans-retinyl ester + H2O = 11-cis-retinol + a fatty acid + H(+). The enzyme catalyses lutein = (3R,3'S)-zeaxanthin. It carries out the reaction all-trans-retinyl hexadecanoate + H2O = 11-cis-retinol + hexadecanoate + H(+). Functionally, critical isomerohydrolase in the retinoid cycle involved in regeneration of 11-cis-retinal, the chromophore of rod and cone opsins. Catalyzes the cleavage and isomerization of all-trans-retinyl fatty acid esters to 11-cis-retinol which is further oxidized by 11-cis retinol dehydrogenase to 11-cis-retinal for use as visual chromophore. Essential for the production of 11-cis retinal for both rod and cone photoreceptors. Also capable of catalyzing the isomerization of lutein to meso-zeaxanthin an eye-specific carotenoid. The soluble form binds vitamin A (all-trans-retinol), making it available for LRAT processing to all-trans-retinyl ester. The membrane form, palmitoylated by LRAT, binds all-trans-retinyl esters, making them available for IMH (isomerohydrolase) processing to all-cis-retinol. The soluble form is regenerated by transferring its palmitoyl groups onto 11-cis-retinol, a reaction catalyzed by LRAT. This chain is Retinoid isomerohydrolase (RPE65), found in Bos taurus (Bovine).